Reading from the N-terminus, the 139-residue chain is Hydrogenase maturation factor HypA (139 aa).

His-2 serves as a coordination point for Ni(2+). Residues Cys-73, Cys-76, Cys-110, and Cys-113 each contribute to the Zn(2+) site.

The protein belongs to the HypA/HybF family.

Functionally, involved in the maturation of [NiFe] hydrogenases. Required for nickel insertion into the metal center of the hydrogenase. The sequence is that of Hydrogenase maturation factor HypA from Pyrococcus furiosus (strain ATCC 43587 / DSM 3638 / JCM 8422 / Vc1).